Here is a 373-residue protein sequence, read N- to C-terminus: sn-glycerol-3-phosphate import ATP-binding protein UgpC 2 (373 aa).

Positions 4–234 constitute an ABC transporter domain; that stretch reads IDIRQVRKSY…PASTFVASFI (231 aa). 36-43 lines the ATP pocket; that stretch reads GPSGCGKS.

This sequence belongs to the ABC transporter superfamily. sn-glycerol-3-phosphate importer (TC 3.A.1.1.3) family. As to quaternary structure, the complex is composed of two ATP-binding proteins (UgpC), two transmembrane proteins (UgpA and UgpE) and a solute-binding protein (UgpB).

It localises to the cell inner membrane. The catalysed reaction is sn-glycerol 3-phosphate(out) + ATP + H2O = sn-glycerol 3-phosphate(in) + ADP + phosphate + H(+). Functionally, part of the ABC transporter complex UgpBAEC involved in sn-glycerol-3-phosphate (G3P) import. Responsible for energy coupling to the transport system. This chain is sn-glycerol-3-phosphate import ATP-binding protein UgpC 2, found in Agrobacterium fabrum (strain C58 / ATCC 33970) (Agrobacterium tumefaciens (strain C58)).